The chain runs to 255 residues: NAP1-related protein 2 (255 aa).

Positions 19–60 form a coiled coil; sequence IDAELVLSIEKLQEIQDDLEKINEKASDEVLEVEQKYNVIRK. A disordered region spans residues 213–255; the sequence is NPLTYFNNDADEEDFDGDDDGDEEEKEGDSDEDDDEEDEVGEE. Residues 221–255 are compositionally biased toward acidic residues; that stretch reads DADEEDFDGDDDGDEEEKEGDSDEDDDEEDEVGEE.

This sequence belongs to the nucleosome assembly protein (NAP) family. Can form homomeric and heteromeric protein complexes with NRP1. Binds histones H2A and H2B and associates with chromatin in vivo. Ubiquitous.

It is found in the cytoplasm. Its subcellular location is the nucleus. Acts as a histone H2A/H2B chaperone in nucleosome assembly, playing a critical role for the correct expression of genes involved in root proliferation and patterning. Required with NRP1 for the maintenance of cell proliferation and differentiation in postembryonic root growth. Involved in both intramolecular and intermolecular somatic homologous recombination. This is NAP1-related protein 2 (NRP2) from Arabidopsis thaliana (Mouse-ear cress).